The chain runs to 352 residues: Small glutamine-rich tetratricopeptide repeat-containing protein 2 (352 aa).

The segment covering 80–97 has biased composition (low complexity); the sequence is PAAASSSSTAPAAAAATP. Residues 80-103 form a disordered region; that stretch reads PAAASSSSTAPAAAAATPSDEDLA. 3 TPR repeats span residues 105–138, 140–172, and 173–206; these read AEQL…NPNS, VYFS…DPKF, and GKAY…DPSN. The disordered stretch occupies residues 217–236; the sequence is KEQLSSSSSSNANDATASRG.

The protein belongs to the SGT family.

Co-chaperone that binds to the molecular chaperone Hsp70 and regulates Hsp70 ATPase activity. This Mycosarcoma maydis (Corn smut fungus) protein is Small glutamine-rich tetratricopeptide repeat-containing protein 2.